Here is a 311-residue protein sequence, read N- to C-terminus: Aspartate carbamoyltransferase catalytic subunit (311 aa).

2 residues coordinate carbamoyl phosphate: Arg52 and Thr53. Lys80 is an L-aspartate binding site. Arg102, His131, and Gln134 together coordinate carbamoyl phosphate. Arg164 and Arg216 together coordinate L-aspartate. Residues Ala259 and Pro260 each contribute to the carbamoyl phosphate site.

The protein belongs to the aspartate/ornithine carbamoyltransferase superfamily. ATCase family. As to quaternary structure, heterododecamer (2C3:3R2) of six catalytic PyrB chains organized as two trimers (C3), and six regulatory PyrI chains organized as three dimers (R2).

It catalyses the reaction carbamoyl phosphate + L-aspartate = N-carbamoyl-L-aspartate + phosphate + H(+). It functions in the pathway pyrimidine metabolism; UMP biosynthesis via de novo pathway; (S)-dihydroorotate from bicarbonate: step 2/3. Catalyzes the condensation of carbamoyl phosphate and aspartate to form carbamoyl aspartate and inorganic phosphate, the committed step in the de novo pyrimidine nucleotide biosynthesis pathway. The polypeptide is Aspartate carbamoyltransferase catalytic subunit (Lactiplantibacillus plantarum (strain ATCC BAA-793 / NCIMB 8826 / WCFS1) (Lactobacillus plantarum)).